Here is a 443-residue protein sequence, read N- to C-terminus: Pyrrolysine--tRNA ligase (443 aa).

The interval valine 103 to proline 177 is disordered. The span at proline 131–proline 177 shows a compositional bias: low complexity.

Belongs to the class-II aminoacyl-tRNA synthetase family.

Its subcellular location is the cytoplasm. It carries out the reaction tRNA(Pyl) + L-pyrrolysine + ATP = L-pyrrolysyl-tRNA(Pyl) + AMP + diphosphate. Functionally, catalyzes the attachment of pyrrolysine to tRNA(Pyl). Pyrrolysine is a lysine derivative encoded by the termination codon UAG. This chain is Pyrrolysine--tRNA ligase, found in Methanosarcina acetivorans (strain ATCC 35395 / DSM 2834 / JCM 12185 / C2A).